Reading from the N-terminus, the 520-residue chain is Type I restriction enzyme EcoprrI methylase subunit (520 aa).

S-adenosyl-L-methionine is bound by residues 198–203 (EFFTPQ), 230–232 (SGS), and Glu-254.

It belongs to the N(4)/N(6)-methyltransferase family. The type I restriction/modification system is composed of three polypeptides R, M and S; the restriction enzyme has stoichiometry R(2)M(2)S(1) while the methyltransferase is M(2)S(1).

It catalyses the reaction a 2'-deoxyadenosine in DNA + S-adenosyl-L-methionine = an N(6)-methyl-2'-deoxyadenosine in DNA + S-adenosyl-L-homocysteine + H(+). In terms of biological role, the subtype gamma methyltransferase (M) subunit of a type I restriction enzyme. The M and S subunits together form a methyltransferase (MTase) that methylates two adenine residues of the sequence 5'-CCAN(7)ATGC-3'. In the presence of the R subunit the complex can also act as an endonuclease, binding to the same target sequence but cutting the DNA some distance from this site. Whether the DNA is cut or modified depends on the methylation state of the target sequence. When the target site is unmodified, the DNA is cut. When the target site is hemimethylated, the complex acts as a maintenance MTase modifying the DNA so that both strands become methylated. After locating a non-methylated recognition site, the enzyme complex serves as a molecular motor that translocates DNA in an ATP-dependent manner until a collision occurs that triggers cleavage. This chain is Type I restriction enzyme EcoprrI methylase subunit, found in Escherichia coli.